Consider the following 147-residue polypeptide: Large ribosomal subunit protein bL9 (147 aa).

Belongs to the bacterial ribosomal protein bL9 family.

Binds to the 23S rRNA. This Shouchella clausii (strain KSM-K16) (Alkalihalobacillus clausii) protein is Large ribosomal subunit protein bL9.